The following is a 328-amino-acid chain: Malate dehydrogenase (328 aa).

Residue 13–19 participates in NAD(+) binding; the sequence is GGKGQIA. The substrate site is built by R94 and R100. NAD(+) contacts are provided by residues N107, Q114, and 131-133; that span reads VGN. Positions 133 and 164 each coordinate substrate. H189 (proton acceptor) is an active-site residue.

This sequence belongs to the LDH/MDH superfamily. MDH type 2 family.

It carries out the reaction (S)-malate + NAD(+) = oxaloacetate + NADH + H(+). In terms of biological role, catalyzes the reversible oxidation of malate to oxaloacetate. This Chlamydia pneumoniae (Chlamydophila pneumoniae) protein is Malate dehydrogenase.